Here is a 615-residue protein sequence, read N- to C-terminus: Extracellular metalloproteinase 1 (615 aa).

The signal sequence occupies residues 1–8 (SLPLHVLA). A propeptide spanning residues 9 to 235 (HPQPSTSTSL…VHNVVDYVAH (227 aa)) is cleaved from the precursor. An N-linked (GlcNAc...) asparagine glycan is attached at asparagine 276. Residue histidine 419 participates in Zn(2+) binding. The active site involves glutamate 420. Histidine 423 contributes to the Zn(2+) binding site. 3 N-linked (GlcNAc...) asparagine glycosylation sites follow: asparagine 464, asparagine 583, and asparagine 612.

It belongs to the peptidase M36 family. Requires Zn(2+) as cofactor.

Its subcellular location is the secreted. Secreted metalloproteinase probably acting as a virulence factor. The sequence is that of Extracellular metalloproteinase 1 (MEP1) from Trichophyton equinum (Horse ringworm fungus).